A 538-amino-acid polypeptide reads, in one-letter code: Protein PNS1 (538 aa).

The segment covering 1 to 54 (MGESDAYYNGGQQQQYNGGYQQQYQPQPPAASYQAPPQQPYQQQPYQQGPPQNG) has biased composition (low complexity). Residues 1 to 67 (MGESDAYYNG…GNGYMPAQGY (67 aa)) form a disordered region. The Cytoplasmic portion of the chain corresponds to 1-88 (MGESDAYYNG…FKIAKPKYND (88 aa)). Residues 89 to 109 (LWAGILLILVFAGFVVVSGLA) traverse the membrane as a helical segment. Residues 110 to 137 (LQGYSANKGNAGDGIYNNKNDFSPNTST) are Extracellular-facing. Asn134 is a glycosylation site (N-linked (GlcNAc...) asparagine). A helical membrane pass occupies residues 138 to 158 (VILFMFVLAVAFVLSYAYVWM). Topologically, residues 159 to 165 (ARLFPKQ) are cytoplasmic. The chain crosses the membrane as a helical span at residues 166–186 (FIWVTGILNVCWAIGTAIFYL). Topologically, residues 187–191 (WRKYW) are extracellular. Residues 192–212 (SAGIVFLIFGLFMAFCFWTWI) form a helical membrane-spanning segment. Over 213 to 239 (SRIPFSALMLKTTIDVSKKYGHVYLVS) the chain is Cytoplasmic. Residues 240–260 (LIGGIIATAFSAWYAITLVGI) traverse the membrane as a helical segment. Residues 261–280 (YVKYQPAQDNPSCADGGCGK) lie on the Extracellular side of the membrane. The chain crosses the membrane as a helical span at residues 281-301 (GKVIGLIAFITFAMYWFSEWL). At 302-335 (KNTIHTTIAGVYGSWYFNPHNFPKDATRASAKRA) the chain is on the cytoplasmic side. Residues 336-356 (LTYSFGSIALGSLLVAIIQFL) traverse the membrane as a helical segment. At 357–372 (RQICNAARNQEGADGS) the chain is on the extracellular side. A helical membrane pass occupies residues 373-393 (FVGYAIFCCISCLLGLLEWAV). The Cytoplasmic portion of the chain corresponds to 394-434 (EFINRYAFCHIALYGKAYFAAAKDTWKMIKDRGIDALINDC). The chain crosses the membrane as a helical span at residues 435–455 (LIGPVLSFGALFIAYACALLA). Residues 456–474 (YLYLYFTDPAYNSDGQYTA) lie on the Extracellular side of the membrane. Residues 475–495 (VVMAFSFLIGFQIANVFTTPI) form a helical membrane-spanning segment. At 496 to 538 (SSGIETIFVAAGWDPQVMWRDHPELYNEMVRVYPKVQQVIKDR) the chain is on the cytoplasmic side.

Belongs to the CTL (choline transporter-like) family.

It is found in the cell membrane. Functionally, probably involved in transport through the plasma membrane. This chain is Protein PNS1 (PNS1), found in Gibberella zeae (strain ATCC MYA-4620 / CBS 123657 / FGSC 9075 / NRRL 31084 / PH-1) (Wheat head blight fungus).